Here is a 136-residue protein sequence, read N- to C-terminus: Protein NrdI (136 aa).

This sequence belongs to the NrdI family.

Probably involved in ribonucleotide reductase function. The protein is Protein NrdI of Escherichia coli O1:K1 / APEC.